The chain runs to 636 residues: 1-deoxy-D-xylulose-5-phosphate synthase (636 aa).

Thiamine diphosphate-binding positions include H75 and 116–118 (AHS). D147 serves as a coordination point for Mg(2+). Residues 148-149 (GA), N177, Y288, and E370 each bind thiamine diphosphate. Mg(2+) is bound at residue N177.

The protein belongs to the transketolase family. DXPS subfamily. As to quaternary structure, homodimer. It depends on Mg(2+) as a cofactor. The cofactor is thiamine diphosphate.

The catalysed reaction is D-glyceraldehyde 3-phosphate + pyruvate + H(+) = 1-deoxy-D-xylulose 5-phosphate + CO2. Its pathway is metabolic intermediate biosynthesis; 1-deoxy-D-xylulose 5-phosphate biosynthesis; 1-deoxy-D-xylulose 5-phosphate from D-glyceraldehyde 3-phosphate and pyruvate: step 1/1. Its function is as follows. Catalyzes the acyloin condensation reaction between C atoms 2 and 3 of pyruvate and glyceraldehyde 3-phosphate to yield 1-deoxy-D-xylulose-5-phosphate (DXP). This Ralstonia nicotianae (strain ATCC BAA-1114 / GMI1000) (Ralstonia solanacearum) protein is 1-deoxy-D-xylulose-5-phosphate synthase.